Here is a 143-residue protein sequence, read N- to C-terminus: MIRKSKKITKKRGSRTCGYGEAKKHRGAGHRGGRGNAGHQKHKWLSVCKFNPDYFGKYGFNRNPCLIKQLETINIGELEEYILKYKDAFQVEEGKVVVNATEIGFEKVLGKGRISTAMVVKAVEFSEGAKEKIEAAGGEFVEL.

Basic residues-rich tracts occupy residues 1 to 14 (MIRK…KRGS) and 23 to 38 (KKHR…GNAG). The interval 1-38 (MIRKSKKITKKRGSRTCGYGEAKKHRGAGHRGGRGNAG) is disordered.

It belongs to the universal ribosomal protein uL15 family. In terms of assembly, part of the 50S ribosomal subunit.

Binds to the 23S rRNA. The chain is Large ribosomal subunit protein uL15 from Methanococcus maripaludis (strain DSM 14266 / JCM 13030 / NBRC 101832 / S2 / LL).